The sequence spans 463 residues: MFS-type transporter criB (463 aa).

Helical transmembrane passes span leucine 5 to methionine 27, methionine 46 to glycine 66, valine 83 to isoleucine 103, leucine 106 to isoleucine 126, leucine 141 to asparagine 161, methionine 168 to proline 188, leucine 256 to tyrosine 276, isoleucine 293 to phenylalanine 313, leucine 323 to alanine 343, valine 355 to valine 375, and phenylalanine 402 to proline 422.

It belongs to the major facilitator superfamily. Sugar transporter (TC 2.A.1.1) family.

Its subcellular location is the membrane. In terms of biological role, MFS-type transporter; part of the gene cluster that mediates the biosynthesis of echinulin family alkaloid. In Aspergillus cristatus (Chinese Fuzhuan brick tea-fermentation fungus), this protein is MFS-type transporter criB.